A 704-amino-acid chain; its full sequence is Protein arginine N-methyltransferase 7 (704 aa).

2 consecutive SAM-dependent MTase PRMT-type domains span residues 14–356 (ENTW…YSLW) and 366–704 (SQPA…EKSE).

The protein belongs to the class I-like SAM-binding methyltransferase superfamily. Protein arginine N-methyltransferase family. PRMT7 subfamily.

Its function is as follows. Essential arginine methyltransferase that can both catalyze the formation of omega-N monomethylarginine (MMA) and symmetrical dimethylarginine (sDMA). Specifically mediates the symmetrical dimethylation of arginine residues in the small nuclear ribonucleoproteins SmD1 and SmD3. The protein is Protein arginine N-methyltransferase 7 (Art7) of Drosophila grimshawi (Hawaiian fruit fly).